Here is a 329-residue protein sequence, read N- to C-terminus: G-protein coupled bile acid receptor 1 (329 aa).

Topologically, residues 1–19 are extracellular; it reads MTSNSTREVPSPVPAGALG. N-linked (GlcNAc...) asparagine glycosylation occurs at asparagine 4. Residues 20 to 40 form a helical membrane-spanning segment; that stretch reads LSLALASLIVAANLLLAVGIA. Residues 41–52 are Cytoplasmic-facing; sequence GDRRLRSPPAGC. A helical transmembrane segment spans residues 53–73; it reads FFLSLLLAGLLTGLALPALPV. Topologically, residues 74–85 are extracellular; sequence LWSQSRRGYWSC. A disulfide bond links cysteine 85 and cysteine 155. Residues 86–106 traverse the membrane as a helical segment; sequence LFLYLAPNFCFLSLLANLLLV. Topologically, residues 107–125 are cytoplasmic; it reads HGERYMAVLRPLRPRGSMR. The helical transmembrane segment at 126 to 146 threads the bilayer; that stretch reads LALLLTWAAPLLFASLPALGW. Residues 147-165 lie on the Extracellular side of the membrane; it reads NHWAPGGNCSSQAVFPAPY. N-linked (GlcNAc...) asparagine glycosylation occurs at asparagine 154. Residues 166–186 form a helical membrane-spanning segment; it reads LYLEIYGLLLPAVGAAALLSV. Topologically, residues 187 to 230 are cytoplasmic; it reads RVLVTAHRQLQDIRRLERAVCRGAPSALARALTWRQARAQAGAT. A helical transmembrane segment spans residues 231–251; sequence LLFGLCWGPYVATLLLSVLAF. The Extracellular segment spans residues 252 to 261; that stretch reads EQRPPLGPGT. The chain crosses the membrane as a helical span at residues 262–282; the sequence is LLSLISLGSASAAAVPVAMGL. The Cytoplasmic segment spans residues 283–329; the sequence is GDQRYTGPWRVAAQKWLRMLRGRPQSSPGPSTAYHTSSQSSVDLDLN. The tract at residues 304 to 329 is disordered; the sequence is GRPQSSPGPSTAYHTSSQSSVDLDLN. Residues 306–329 are compositionally biased toward polar residues; that stretch reads PQSSPGPSTAYHTSSQSSVDLDLN.

It belongs to the G-protein coupled receptor 1 family.

The protein resides in the cell membrane. Functionally, receptor for bile acid. Bile acid-binding induces its internalization, activation of extracellular signal-regulated kinase and intracellular cAMP production. May be involved in the suppression of macrophage functions by bile acids. Involved in bile acid promoted GLP1R secretion. This is G-protein coupled bile acid receptor 1 (GPBAR1) from Bos taurus (Bovine).